Reading from the N-terminus, the 313-residue chain is Protein FixB (313 aa).

Residue 255 to 283 (LYLAVGISGQIQHMVGANASQTIFAINKD) participates in FAD binding.

The protein belongs to the ETF alpha-subunit/FixB family. In terms of assembly, heterodimer of FixA and FixB.

It participates in amine and polyamine metabolism; carnitine metabolism. Required for anaerobic carnitine reduction. May bring reductant to CaiA. The sequence is that of Protein FixB from Escherichia coli O81 (strain ED1a).